The primary structure comprises 1050 residues: Collagen alpha-2(I) chain (1050 aa).

The disordered stretch occupies residues 1-1050 (SGGFDFSFLP…FGYEGDFYRA (1050 aa)). 4-hydroxyproline occurs at positions 10 and 13. Over residues 20–32 (RYYGVGLGPGPMG) the composition is skewed to gly residues. Low complexity-rich tracts occupy residues 33–46 (LMGP…SGAP) and 56–77 (EPGE…APGK). 4-hydroxyproline occurs at positions 40 and 46. A compositionally biased stretch (basic and acidic residues) spans 78-92 (AGEDGHPGKPGRPGE). Residue K114 is modified to 5-hydroxylysine; alternate. A glycan (O-linked (Gal...) hydroxylysine; alternate) is linked at K114. Composition is skewed to low complexity over residues 161–190 (VGAP…SAGP), 236–257 (PGAN…AGAP), 298–311 (EPGS…PGSS), 320–338 (NGES…RGNP), and 355–371 (PAGA…RGPS). Residues P377 and P380 each carry the 4-hydroxyproline modification. Low complexity-rich tracts occupy residues 406–425 (LPGI…RGEA) and 452–467 (AGNR…NGAQ). A compositionally biased stretch (gly residues) spans 474–483 (GVQGGKGEQG). Composition is skewed to low complexity over residues 530–547 (PGES…SRGP), 598–642 (VGTT…PRGS), and 649–669 (VGPA…QPGA). A compositionally biased stretch (basic and acidic residues) spans 670 to 679 (KGERGTKGPK). Residues 687 to 697 (PTGPVGSAGPA) show a composition bias toward low complexity. The span at 707-716 (GSRGDGGPPG) shows a compositional bias: gly residues. Residues 718-727 (TGFPGAAGRT) show a composition bias toward low complexity. The segment covering 764 to 773 (GETGAGGPPG) has biased composition (gly residues). 4 stretches are compositionally biased toward low complexity: residues 781–808 (SGEP…LGLP), 816–841 (LPGV…RGPS), 881–903 (YAGN…VGPA), and 911–926 (EPGP…ALGP). A compositionally biased stretch (basic and acidic residues) spans 936–947 (RGDKGEPGDKGP). The span at 1020-1032 (SGPPGPPGPPGPP) shows a compositional bias: pro residues.

Belongs to the fibrillar collagen family. In terms of assembly, trimers of one alpha 2(I) and two alpha 1(I) chains. Interacts (via C-terminus) with TMEM131 (via PapD-L domain); the interaction is direct and is involved in assembly and TRAPPIII ER-to-Golgi transport complex-dependent secretion of collagen. Prolines at the third position of the tripeptide repeating unit (G-X-Y) are hydroxylated in some or all of the chains. In terms of tissue distribution, expressed in bones.

The protein localises to the secreted. It is found in the extracellular space. The protein resides in the extracellular matrix. Type I collagen is a member of group I collagen (fibrillar forming collagen). The polypeptide is Collagen alpha-2(I) chain (Megatherium americanum (Giant ground sloth)).